A 32-amino-acid polypeptide reads, in one-letter code: Natriuretic peptide Coa_NP1 (32 aa).

C8 and C24 are joined by a disulfide.

It belongs to the natriuretic peptide family. Snake NP subfamily. In terms of tissue distribution, expressed by the venom gland.

The protein resides in the secreted. Functionally, snake venom natriuretic peptide that exhibits hypotensive and vasodepressor activity in rats. The chain is Natriuretic peptide Coa_NP1 from Crotalus lutosus abyssus (Grand Canyon rattlesnake).